The chain runs to 66 residues: Large ribosomal subunit protein bL33c (66 aa).

Belongs to the bacterial ribosomal protein bL33 family.

The protein resides in the plastid. It is found in the chloroplast. This chain is Large ribosomal subunit protein bL33c, found in Nandina domestica (Heavenly bamboo).